The chain runs to 86 residues: Large ribosomal subunit protein bL31 (86 aa).

Residues 65 to 86 form a disordered region; it reads YGMASSDSSEQKDKSSEEKKES. Residues 73-86 show a composition bias toward basic and acidic residues; that stretch reads SEQKDKSSEEKKES.

The protein belongs to the bacterial ribosomal protein bL31 family. Type A subfamily. Part of the 50S ribosomal subunit.

Its function is as follows. Binds the 23S rRNA. The polypeptide is Large ribosomal subunit protein bL31 (Prochlorococcus marinus (strain NATL2A)).